A 396-amino-acid polypeptide reads, in one-letter code: D-alanine--D-alanine ligase (396 aa).

Residues 141–347 (KMLWQAAGLP…PQDLMAQLLS (207 aa)) enclose the ATP-grasp domain. 174-229 (ETRLGYPLFVKPAQAGSSVGASAVQTRAPLIPAIEAAFQWDEVVLVERYVRAREIE) serves as a coordination point for ATP. Residues D301, E314, and N316 each coordinate Mg(2+). The disordered stretch occupies residues 374-396 (AAHDPDAQGDDWDQRDSNPLPTA).

The protein belongs to the D-alanine--D-alanine ligase family. It depends on Mg(2+) as a cofactor. Mn(2+) serves as cofactor.

The protein resides in the cytoplasm. The enzyme catalyses 2 D-alanine + ATP = D-alanyl-D-alanine + ADP + phosphate + H(+). Its pathway is cell wall biogenesis; peptidoglycan biosynthesis. Cell wall formation. The sequence is that of D-alanine--D-alanine ligase from Treponema pallidum (strain Nichols).